The primary structure comprises 87 residues: Small ribosomal subunit protein bS20 (87 aa).

The tract at residues 1–28 is disordered; the sequence is MANSAQARKRARQASAQRDHNMSQRSEL. The span at 17–28 shows a compositional bias: basic and acidic residues; it reads QRDHNMSQRSEL.

Belongs to the bacterial ribosomal protein bS20 family.

Binds directly to 16S ribosomal RNA. The polypeptide is Small ribosomal subunit protein bS20 (Thiobacillus denitrificans (strain ATCC 25259 / T1)).